The primary structure comprises 895 residues: Ras and Rab interactor 2 (895 aa).

Positions 97-190 (WLQLSLSEEE…VLPFTLKLPY (94 aa)) constitute an SH2 domain. The segment at 284–361 (LSGGLKRPST…KPTPIPPPRL (78 aa)) is disordered. The span at 306–315 (SPPPRPPPPA) shows a compositional bias: pro residues. Positions 328 to 338 (TETQTSMPETV) are enriched in polar residues. A Phosphoserine modification is found at S366. Disordered stretches follow at residues 373–442 (GAKT…SDSL) and 460–481 (SLEDYEGESDQETMAPPIKSKK). The span at 430 to 441 (SDMSISTSSSDS) shows a compositional bias: low complexity. The residue at position 501 (S501) is a Phosphoserine. A Phosphothreonine modification is found at T509. The VPS9 domain occupies 618–757 (DGSWKQLKEN…IKNFQEEQAA (140 aa)). Positions 787–878 (FQNYLRVAFQ…FHFVYKRIKN (92 aa)) constitute a Ras-associating domain.

The protein belongs to the RIN (Ras interaction/interference) family. Homotetramer; probably composed of anti-parallel linkage of two parallel dimers. Interacts with Ras. Interacts with RAB5B, with a much higher affinity for GTP-bound activated RAB5B. Does not interact with other members of the Rab family. As to expression, widely expressed. Expressed in heart, kidney, lung placenta. Expressed at low level in skeletal muscle, spleen and peripheral blood.

Its subcellular location is the cytoplasm. Ras effector protein. May function as an upstream activator and/or downstream effector for RAB5B in endocytic pathway. May function as a guanine nucleotide exchange (GEF) of RAB5B, required for activating the RAB5 proteins by exchanging bound GDP for free GTP. This chain is Ras and Rab interactor 2 (RIN2), found in Homo sapiens (Human).